The following is a 280-amino-acid chain: Protease HtpX (280 aa).

The next 2 helical transmembrane spans lie at 7 to 26 (TFIL…GLLG) and 30 to 49 (GMLV…YWYS). His129 serves as a coordination point for Zn(2+). Glu130 is a catalytic residue. Residue His133 participates in Zn(2+) binding. 2 helical membrane-spanning segments follow: residues 146–166 (ATIA…SMFG) and 178–198 (VVGM…QMAI). Glu203 lines the Zn(2+) pocket.

The protein belongs to the peptidase M48B family. Zn(2+) serves as cofactor.

The protein localises to the cell inner membrane. The chain is Protease HtpX from Legionella pneumophila (strain Lens).